A 375-amino-acid polypeptide reads, in one-letter code: tRNA-specific 2-thiouridylase MnmA (375 aa).

ATP-binding positions include Gly12–Ser19 and Met38. The interval Asn98–Asp100 is interaction with target base in tRNA. Cys103 serves as the catalytic Nucleophile. An intrachain disulfide couples Cys103 to Cys200. Gly127 contributes to the ATP binding site. The segment at Lys150–Gln152 is interaction with tRNA. Cys200 acts as the Cysteine persulfide intermediate in catalysis. Positions Arg312 to Tyr313 are interaction with tRNA.

This sequence belongs to the MnmA/TRMU family.

The protein localises to the cytoplasm. It carries out the reaction S-sulfanyl-L-cysteinyl-[protein] + uridine(34) in tRNA + AH2 + ATP = 2-thiouridine(34) in tRNA + L-cysteinyl-[protein] + A + AMP + diphosphate + H(+). In terms of biological role, catalyzes the 2-thiolation of uridine at the wobble position (U34) of tRNA, leading to the formation of s(2)U34. This chain is tRNA-specific 2-thiouridylase MnmA, found in Ligilactobacillus salivarius (strain UCC118) (Lactobacillus salivarius).